The following is an 83-amino-acid chain: Prolactin-releasing peptide (83 aa).

A signal peptide spans 1–21; sequence MALKTWLLCLLLLSLVLPGAS. Phe52 is subject to Phenylalanine amide. The propeptide occupies 57-83; it reads ATPRDVTGLGQLSCLPLDGRTKFSQRG.

Widely expressed, with highest levels in medulla oblongata and hypothalamus.

It is found in the secreted. In terms of biological role, stimulates prolactin (PRL) release and regulates the expression of prolactin through its receptor GPR10. May stimulate lactotrophs directly to secrete PRL. This is Prolactin-releasing peptide (Prlh) from Rattus norvegicus (Rat).